A 199-amino-acid polypeptide reads, in one-letter code: 3-isopropylmalate dehydratase small subunit (199 aa).

This sequence belongs to the LeuD family. LeuD type 1 subfamily. Heterodimer of LeuC and LeuD.

It catalyses the reaction (2R,3S)-3-isopropylmalate = (2S)-2-isopropylmalate. Its pathway is amino-acid biosynthesis; L-leucine biosynthesis; L-leucine from 3-methyl-2-oxobutanoate: step 2/4. Its function is as follows. Catalyzes the isomerization between 2-isopropylmalate and 3-isopropylmalate, via the formation of 2-isopropylmaleate. The protein is 3-isopropylmalate dehydratase small subunit of Tolumonas auensis (strain DSM 9187 / NBRC 110442 / TA 4).